The primary structure comprises 251 residues: Imidazole glycerol phosphate synthase subunit HisF (251 aa).

Residues aspartate 11 and aspartate 130 contribute to the active site.

The protein belongs to the HisA/HisF family. Heterodimer of HisH and HisF.

The protein resides in the cytoplasm. The enzyme catalyses 5-[(5-phospho-1-deoxy-D-ribulos-1-ylimino)methylamino]-1-(5-phospho-beta-D-ribosyl)imidazole-4-carboxamide + L-glutamine = D-erythro-1-(imidazol-4-yl)glycerol 3-phosphate + 5-amino-1-(5-phospho-beta-D-ribosyl)imidazole-4-carboxamide + L-glutamate + H(+). It functions in the pathway amino-acid biosynthesis; L-histidine biosynthesis; L-histidine from 5-phospho-alpha-D-ribose 1-diphosphate: step 5/9. In terms of biological role, IGPS catalyzes the conversion of PRFAR and glutamine to IGP, AICAR and glutamate. The HisF subunit catalyzes the cyclization activity that produces IGP and AICAR from PRFAR using the ammonia provided by the HisH subunit. The protein is Imidazole glycerol phosphate synthase subunit HisF of Parabacteroides distasonis (strain ATCC 8503 / DSM 20701 / CIP 104284 / JCM 5825 / NCTC 11152).